Consider the following 326-residue polypeptide: Nine-heme cytochrome c (326 aa).

The N-terminal stretch at 1–30 (MRNGTSLLLLAAIALAGAACLTAMGGTAKA) is a signal peptide. His-67, His-70, Cys-77, Cys-80, His-81, His-82, Cys-89, Cys-92, His-93, His-111, Cys-127, Cys-130, His-131, Cys-141, Cys-144, His-145, Cys-157, Cys-160, His-161, His-227, His-230, His-248, Cys-255, Cys-258, His-259, His-260, Cys-271, Cys-274, His-275, His-294, Cys-297, Cys-300, His-301, Cys-314, Cys-317, and His-318 together coordinate heme.

Monomer. In terms of processing, binds 9 heme groups per subunit.

It localises to the periplasm. May form part of a transmembrane redox complex through which electrons are transferred to the cytoplasm for reduction of sulfate. The protein is Nine-heme cytochrome c of Desulfovibrio desulfuricans (strain ATCC 27774 / DSM 6949 / MB).